A 147-amino-acid chain; its full sequence is Catabolic 3-dehydroquinase 2 (147 aa).

Tyr-23 functions as the Proton acceptor in the catalytic mechanism. Asn-74, His-80, and Asp-87 together coordinate substrate. His-100 functions as the Proton donor in the catalytic mechanism. Substrate is bound by residues 101–102 and Arg-111; that span reads IT.

It belongs to the type-II 3-dehydroquinase family. Homododecamer. Adopts a ring-like structure, composed of an arrangement of two hexameric rings stacked on top of one another.

The enzyme catalyses 3-dehydroquinate = 3-dehydroshikimate + H2O. Its pathway is aromatic compound metabolism; 3,4-dihydroxybenzoate biosynthesis; 3,4-dihydroxybenzoate from 3-dehydroquinate: step 1/2. In terms of biological role, is involved in the catabolism of quinate. Allows the utilization of quinate as carbon source via the beta-ketoadipate pathway. This is Catabolic 3-dehydroquinase 2 from Aspergillus terreus (strain NIH 2624 / FGSC A1156).